A 139-amino-acid polypeptide reads, in one-letter code: D-ribose pyranase (139 aa).

His20 functions as the Proton donor in the catalytic mechanism. Substrate contacts are provided by residues Asp28, His106, and 128–130; that span reads YAN.

This sequence belongs to the RbsD / FucU family. RbsD subfamily. Homodecamer.

The protein resides in the cytoplasm. It carries out the reaction beta-D-ribopyranose = beta-D-ribofuranose. The protein operates within carbohydrate metabolism; D-ribose degradation; D-ribose 5-phosphate from beta-D-ribopyranose: step 1/2. Catalyzes the interconversion of beta-pyran and beta-furan forms of D-ribose. This chain is D-ribose pyranase, found in Citrobacter koseri (strain ATCC BAA-895 / CDC 4225-83 / SGSC4696).